Here is a 282-residue protein sequence, read N- to C-terminus: Complement component 1 Q subcomponent-binding protein, mitochondrial (282 aa).

The N-terminal 70 residues, 1–70, are a transit peptide targeting the mitochondrion; it reads MLPLLRCVPR…PRGPCACGCG (70 aa). Residues 76-93 are C1q binding; it reads TEGDKAFVDFLNDEIKEE. The residue at position 91 (K91) is an N6-acetyllysine. The disordered stretch occupies residues 137–163; sequence NSIPPTFDGEEEPTQGQKVEEQEPELT. The segment at 168–213 is interaction with MAVS; the sequence is FVVEVIKNDDGKKALVLDCHYPEDEVGQEDEAESDIFSIREVSFQS. Phosphotyrosine is present on Y188. S201 and S205 each carry phosphoserine.

The protein belongs to the MAM33 family. As to quaternary structure, homotrimer; three monomers form a donut-shaped structure with an unusually asymmetric charge distribution on the surface. Interacts with CDK13, HRK, VTN, NFYB, ADRA1B, FOXC1, DDX21, DDX50, NCL, SRSF1 and SRSF9. Interacts with CD93; the association may represent a cell surface C1q receptor. Interacts with KRT1; the association represents a cell surface kininogen receptor. Interacts with CD209; the interaction is indicative for a C1q:C1QBP:CD209 signaling complex. Interacts with FBL and RRP1; the respective interactions with C1QBP are competitive. Probably associates with the mitoribosome. Interacts with MAVS; the interaction occurs upon viral transfection. Interacts with PPIF. Interacts with U2AF1L4. Interacts with PLEKHN1. Interacts with VGF-derived peptide TLQP-21. Interacts with MRE11 and RAD50; forming the MRC (MRE11-RAD50-C1QBP) complex that inhibits the activity of MRE11. In terms of assembly, (Microbial infection) Interacts with Rubella virus capsid protein; the interaction occurs in mitochondria. (Microbial infection) Interacts with L.monocytogenes InlB.

It is found in the mitochondrion matrix. It localises to the nucleus. The protein resides in the cell membrane. The protein localises to the secreted. Its subcellular location is the cytoplasm. It is found in the nucleolus. Functionally, multifunctional and multicompartmental protein involved in inflammation and infection processes, ribosome biogenesis, protein synthesis in mitochondria, regulation of apoptosis, transcriptional regulation and pre-mRNA splicing. At the cell surface is thought to act as an endothelial receptor for plasma proteins of the complement and kallikrein-kinin cascades. Putative receptor for C1q; specifically binds to the globular 'heads' of C1q thus inhibiting C1; may perform the receptor function through a complex with C1qR/CD93. In complex with cytokeratin-1/KRT1 is a high affinity receptor for kininogen-1/HMWK. Can also bind other plasma proteins, such as coagulation factor XII leading to its autoactivation. May function to bind initially fluid kininogen-1 to the cell membrane. The secreted form may enhance both extrinsic and intrinsic coagulation pathways. It is postulated that the cell surface form requires docking with transmembrane proteins for downstream signaling which might be specific for a cell-type or response. By acting as C1q receptor is involved in chemotaxis of immature dendritic cells and neutrophils and is proposed to signal through CD209/DC-SIGN on immature dendritic cells, through integrin alpha-4/beta-1 during trophoblast invasion of the decidua, and through integrin beta-1 during endothelial cell adhesion and spreading. Signaling involved in inhibition of innate immune response is implicating the PI3K-AKT/PKB pathway. Required for protein synthesis in mitochondria. In mitochondrial translation may be involved in formation of functional 55S mitoribosomes; the function seems to involve its RNA-binding activity. Acts as a RNA modification reader, which specifically recognizes and binds mitochondrial RNAs modified by C5-methylcytosine (m5C) in response to stress, and promotes recruitment of the mitochondrial degradosome complex, leading to their degradation. May be involved in the nucleolar ribosome maturation process; the function may involve the exchange of FBL for RRP1 in the association with pre-ribosome particles. Involved in regulation of RNA splicing by inhibiting the RNA-binding capacity of SRSF1 and its phosphorylation. Is required for the nuclear translocation of splicing factor U2AF1L4. Involved in regulation of CDKN2A- and HRK-mediated apoptosis. Stabilizes mitochondrial CDKN2A isoform smARF. May be involved in regulation of FOXC1 transcriptional activity and NFY/CCAAT-binding factor complex-mediated transcription. May play a role in antibacterial defense as it can bind to cell surface hyaluronan and inhibit Streptococcus pneumoniae hyaluronate lyase. May be involved in modulation of the immune response; ligation by HCV core protein is resulting in suppression of interleukin-12 production in monocyte-derived dendritic cells. Involved in regulation of antiviral response by inhibiting RIGI- and IFIH1-mediated signaling pathways probably involving its association with MAVS after viral infection. Acts as a regulator of DNA repair via homologous recombination by inhibiting the activity of MRE11: interacts with unphosphorylated MRE11 and RAD50 in absence of DNA damage, preventing formation and activity of the MRN complex. Following DNA damage, dissociates from phosphorylated MRE11, allowing formation of the MRN complex. In terms of biological role, (Microbial infection) During bacterial infection processes acts as an attachment site for microbial proteins, including Listeria monocytogenes internalin B (InlB). The polypeptide is Complement component 1 Q subcomponent-binding protein, mitochondrial (C1QBP) (Chlorocebus aethiops (Green monkey)).